The primary structure comprises 156 residues: Small ribosomal subunit protein uS7 (156 aa).

Belongs to the universal ribosomal protein uS7 family. Part of the 30S ribosomal subunit. Contacts proteins S9 and S11.

Functionally, one of the primary rRNA binding proteins, it binds directly to 16S rRNA where it nucleates assembly of the head domain of the 30S subunit. Is located at the subunit interface close to the decoding center, probably blocks exit of the E-site tRNA. In Idiomarina loihiensis (strain ATCC BAA-735 / DSM 15497 / L2-TR), this protein is Small ribosomal subunit protein uS7.